The sequence spans 225 residues: UPF0758 protein BCE33L4198 (225 aa).

An MPN domain is found at S103–I225. 3 residues coordinate Zn(2+): H174, H176, and D187. The short motif at H174–D187 is the JAMM motif element.

This sequence belongs to the UPF0758 family.

This chain is UPF0758 protein BCE33L4198, found in Bacillus cereus (strain ZK / E33L).